Consider the following 348-residue polypeptide: Chlorophyll(ide) b reductase NOL, chloroplastic (348 aa).

The transit peptide at Met1–Ser61 directs the protein to the chloroplast. Ile84–Ile108 lines the NAD(+) pocket. Tyr233 functions as the Proton acceptor in the catalytic mechanism.

Belongs to the short-chain dehydrogenases/reductases (SDR) family. In terms of assembly, interacts with NCY1 to form a complex that acts as a chlorophyll b reductase. Interacts with HCAR, RCCR and the LHCII complex. Part of a SGR1-CCE-LHCII complex, which acts in chlorophyll breakdown.

It localises to the plastid. The protein localises to the chloroplast thylakoid membrane. The catalysed reaction is 7(1)-hydroxychlorophyllide a + NAD(+) = chlorophyllide b + NADH + H(+). It carries out the reaction 7(1)-hydroxychlorophyllide a + NADP(+) = chlorophyllide b + NADPH + H(+). Functionally, required for chlorophyll b degradation. Chlorophyll b, chlorophyllide b, pheophorbide b and pheophytin b can be used as substrates. Belongs to the chlorophyll catabolic enzymes (CCEs). This chain is Chlorophyll(ide) b reductase NOL, chloroplastic (NOL), found in Arabidopsis thaliana (Mouse-ear cress).